Consider the following 326-residue polypeptide: Light-induced protein, chloroplastic (326 aa).

A chloroplast-targeting transit peptide spans 1 to 63 (MASISSLNQI…TNPKPKFTAQ (63 aa)).

This sequence belongs to the LIPC family. As to quaternary structure, associates with the major light-harvesting antenna complex polypeptides of the PSII oxygen-evolving complex. In terms of tissue distribution, expressed at high levels in leaves and in the petals and anthers of flowers.

It is found in the plastid. The protein localises to the chloroplast thylakoid membrane. Functionally, required for normal plant growth. May be both photoprotective and play an ancillary role in photosynthesis. May structurally stabilize thylakoids during osmotic and oxidative stress. The protein is Light-induced protein, chloroplastic of Solanum demissum (Wild potato).